We begin with the raw amino-acid sequence, 150 residues long: Large ribosomal subunit protein uL15 (150 aa).

The interval 1-57 is disordered; it reads MSLTLQSLKPQKGARRRKMRKGRGIAAGQGASCGFGMRGQKSRSGRPTRPGFEGGQM. The segment covering 12 to 23 has biased composition (basic residues); sequence KGARRRKMRKGR. A compositionally biased stretch (gly residues) spans 25-37; it reads IAAGQGASCGFGM.

It belongs to the universal ribosomal protein uL15 family. Part of the 50S ribosomal subunit.

Its function is as follows. Binds to the 23S rRNA. This chain is Large ribosomal subunit protein uL15, found in Synechococcus sp. (strain RCC307).